The sequence spans 744 residues: Glucosamine inositolphosphorylceramide transferase 1 (744 aa).

Transmembrane regions (helical) follow at residues 31–51 (FLVA…WLVV), 378–398 (SLFG…VGFV), and 460–480 (LFFC…VHFL). Substrate contacts are provided by residues N534, 558–563 (NSLNNR), 579–581 (DDD), R609, and 665–669 (FNCED). D581 contributes to the Mn(2+) binding site. Residues C667 and C718 are joined by a disulfide bond. The active site involves D669.

It belongs to the glycosyltransferase 64 family. The cofactor is Mn(2+). As to expression, highly expressed in almost all tissues.

The protein localises to the membrane. It functions in the pathway sphingolipid metabolism. In terms of biological role, essential protein. Glycosyltransferase that mediates the glycosylation of glycosylinositol phosphorylceramides (GIPCs), the major sphingolipids in the plasma membrane; acts as a HexN(Ac)-specific GIPC sugar transferase. Responsible for the glycosylation of a subgroup of GIPCs found in seeds and pollen that contain GlcNAc and GlcN (GlcN(Ac)). Maybe involved in the maintenance of cell-cell adhesion. The chain is Glucosamine inositolphosphorylceramide transferase 1 from Oryza sativa subsp. japonica (Rice).